Consider the following 253-residue polypeptide: Hydroxyacylglutathione hydrolase (253 aa).

Zn(2+)-binding residues include H54, H56, D58, H59, H112, D131, and H169.

Belongs to the metallo-beta-lactamase superfamily. Glyoxalase II family. Monomer. The cofactor is Zn(2+).

It carries out the reaction an S-(2-hydroxyacyl)glutathione + H2O = a 2-hydroxy carboxylate + glutathione + H(+). It functions in the pathway secondary metabolite metabolism; methylglyoxal degradation; (R)-lactate from methylglyoxal: step 2/2. In terms of biological role, thiolesterase that catalyzes the hydrolysis of S-D-lactoyl-glutathione to form glutathione and D-lactic acid. In Bartonella quintana (strain Toulouse) (Rochalimaea quintana), this protein is Hydroxyacylglutathione hydrolase.